Here is a 383-residue protein sequence, read N- to C-terminus: Dual-specificity RNA methyltransferase RlmN (383 aa).

Residue E93 is the Proton acceptor of the active site. The 241-residue stretch at 99–339 (EETRGTLCVS…TTIRKTRGDD (241 aa)) folds into the Radical SAM core domain. Cysteines 106 and 344 form a disulfide. Positions 113, 117, and 120 each coordinate [4Fe-4S] cluster. S-adenosyl-L-methionine-binding positions include 170–171 (GE), S202, 224–226 (SLH), and N301. Residue C344 is the S-methylcysteine intermediate of the active site.

The protein belongs to the radical SAM superfamily. RlmN family. [4Fe-4S] cluster is required as a cofactor.

Its subcellular location is the cytoplasm. The catalysed reaction is adenosine(2503) in 23S rRNA + 2 reduced [2Fe-2S]-[ferredoxin] + 2 S-adenosyl-L-methionine = 2-methyladenosine(2503) in 23S rRNA + 5'-deoxyadenosine + L-methionine + 2 oxidized [2Fe-2S]-[ferredoxin] + S-adenosyl-L-homocysteine. It carries out the reaction adenosine(37) in tRNA + 2 reduced [2Fe-2S]-[ferredoxin] + 2 S-adenosyl-L-methionine = 2-methyladenosine(37) in tRNA + 5'-deoxyadenosine + L-methionine + 2 oxidized [2Fe-2S]-[ferredoxin] + S-adenosyl-L-homocysteine. Specifically methylates position 2 of adenine 2503 in 23S rRNA and position 2 of adenine 37 in tRNAs. m2A2503 modification seems to play a crucial role in the proofreading step occurring at the peptidyl transferase center and thus would serve to optimize ribosomal fidelity. This is Dual-specificity RNA methyltransferase RlmN from Ralstonia pickettii (strain 12J).